We begin with the raw amino-acid sequence, 2453 residues long: Tyrosine-protein phosphatase non-receptor type 13 (2453 aa).

The 188-residue stretch at 3-190 folds into the KIND domain; it reads VSLAEALEVR…SGTDPLSRSS (188 aa). Residues 183–227 form a disordered region; that stretch reads TDPLSRSSEQKPDRSQAIRDRLRGKGLPTGRSSTSDALDTHEAPL. Over residues 190–205 the composition is skewed to basic and acidic residues; it reads SEQKPDRSQAIRDRLR. S240 is modified (phosphoserine). Residues 253–285 are disordered; the sequence is EDYLKDTPSDNNSRHEDSETFSSPYQFKTSTPQ. The segment covering 256–270 has biased composition (basic and acidic residues); the sequence is LKDTPSDNNSRHEDS. Positions 272–285 are enriched in polar residues; it reads TFSSPYQFKTSTPQ. S297 and S298 each carry phosphoserine. Residues 429 to 457 form a disordered region; sequence SEASKRFESSSGLPGVDETGQTRPSRQYE. Residues 447–457 are compositionally biased toward polar residues; it reads TGQTRPSRQYE. Residues 458–493 adopt a coiled-coil conformation; sequence TSLEGNLINQDIMLRRQEEEMMQLQARMALRQSRLS. The 301-residue stretch at 565-865 folds into the FERM domain; the sequence is RKVNIRLLSG…SQHKFQLQMR (301 aa). Residues S883, S890, S901, S904, and S907 each carry the phosphoserine modification. Residues 944-957 show a composition bias toward basic and acidic residues; that stretch reads KEKTDKASWEEKPR. Disordered regions lie at residues 944–966 and 1007–1063; these read KEKTDKASWEEKPRGMSKSYHDL and LAGL…VPFK. Residues S1021 and S1025 each carry the phosphoserine modification. Residues 1025 to 1034 show a composition bias toward basic and acidic residues; it reads SPERRNHESD. The segment covering 1049-1058 has biased composition (low complexity); sequence SLPSSGKSSS. Residue S1076 is modified to Phosphoserine. The region spanning 1084–1170 is the PDZ 1 domain; sequence LVNLKKDPKH…DVTLVISQPK (87 aa). 2 disordered regions span residues 1199-1356 and 1441-1478; these read DSAM…GDTF and GQVPTSRERDPAGPQSPPPDQDAQRQAPEKVAKQTPHV. Residue S1221 is modified to Phosphoserine. 2 stretches are compositionally biased toward polar residues: residues 1242 to 1252 and 1267 to 1279; these read ESASLSQSQVN and PQHSSPSPSVTTK. At S1270 the chain carries Phosphoserine. A compositionally biased stretch (basic and acidic residues) spans 1297–1315; it reads GISDLIEHLDCADSDKDDS. Over residues 1331–1341 the composition is skewed to low complexity; it reads SSSLSTSNKTS. One can recognise a PDZ 2 domain in the interval 1357–1442; that stretch reads EVELAKTDGS…VVHLLLEKGQ (86 aa). Basic and acidic residues predominate over residues 1467-1478; sequence APEKVAKQTPHV. One can recognise a PDZ 3 domain in the interval 1491–1579; sequence EVKLFKNSSG…EVSLLLCRPA (89 aa). Residues 1602–1629 show a composition bias toward polar residues; that stretch reads LNSSKETSQPSSSVEQGASSDDNGVSGK. Disordered stretches follow at residues 1602 to 1662 and 1695 to 1726; these read LNSS…AKMP and KLESESSHPPPLDVSPGQTCQPPAECAPSDAT. A compositionally biased stretch (basic and acidic residues) spans 1638-1655; the sequence is SRRESYSDHSESGEDDSV. 2 PDZ domains span residues 1764–1845 and 1857–1942; these read LITL…GRIL and LPDI…TRDG. Disordered regions lie at residues 1991–2024 and 2051–2139; these read EAVCPAGEGSSSQMKESAGLTETKESNSRDDDIY and RHAT…DPPF. The segment covering 2012-2021 has biased composition (basic and acidic residues); that stretch reads ETKESNSRDD. The region spanning 2180–2434 is the Tyrosine-protein phosphatase domain; it reads PSKELENLQE…VFCYQVILYV (255 aa). Residues D2345, 2375–2381, and Q2419 each bind substrate; that span reads CSAGIGR. The active-site Phosphocysteine intermediate is the C2375.

The protein belongs to the protein-tyrosine phosphatase family. Non-receptor class subfamily. As to quaternary structure, interacts (via the first PDZ domain) with PLEKHA1 and PLEKHA2. Interacts (via the second PDZ domain) with TNFRSF6 (Fas receptor) (via C-terminus). Interacts (via the second PDZ domain) with TRIP6 (via the third LIM domain and C-terminus). Interacts (via the third PDZ domain) with NGFR (via C-terminal SVP motif) and PKN2 (via C-terminus). Interacts (via the second or fourth PDZ domains) with PDLIM4 (via C-terminus only or via combined C-terminus and LIM domain, but not LIM domain only). Found in a complex with PDLIM4 and TRIP6. Interacts with PDLIM4; this interaction results in dephosphorylation of SRC 'Tyr-419' by this protein leading to its inactivation. Interacts with BRD7. Interacts with RAPGEF6. Interacts with ARHGAP29. Interacts with PIK3R2; dephosphorylates PIK3R2. Interacts with FBXL2. Interacts (via the FERM domain) with ENTR1. Found in a complex with ENTR1, PTPN13 and GIT1. In terms of tissue distribution, expressed predominantly in kidney and, to a lesser extent, in lung, heart, brain and testis.

It is found in the cytoplasm. Its subcellular location is the cytoskeleton. The protein localises to the nucleus. It localises to the cell projection. The protein resides in the lamellipodium. The catalysed reaction is O-phospho-L-tyrosyl-[protein] + H2O = L-tyrosyl-[protein] + phosphate. In terms of biological role, tyrosine phosphatase which negatively regulates FAS-induced apoptosis and NGFR-mediated pro-apoptotic signaling. May regulate phosphoinositide 3-kinase (PI3K) signaling through dephosphorylation of PIK3R2. In Mus musculus (Mouse), this protein is Tyrosine-protein phosphatase non-receptor type 13 (Ptpn13).